We begin with the raw amino-acid sequence, 435 residues long: Elongation factor 1-alpha (435 aa).

The 226-residue stretch at 4-229 (KPHLNLIVIG…DQLEIPPKPV (226 aa)) folds into the tr-type G domain. Residues 13–20 (GHVDHGKS) are G1. 13-20 (GHVDHGKS) contacts GTP. Mg(2+) is bound at residue Ser-20. Residues 69-73 (GVTIN) are G2. The segment at 90 to 93 (DAPG) is G3. Residues 90 to 94 (DAPGH) and 152 to 155 (NKMD) contribute to the GTP site. Positions 152 to 155 (NKMD) are G4. The segment at 193–195 (VAP) is G5.

It belongs to the TRAFAC class translation factor GTPase superfamily. Classic translation factor GTPase family. EF-Tu/EF-1A subfamily.

The protein resides in the cytoplasm. It carries out the reaction GTP + H2O = GDP + phosphate + H(+). Functionally, GTP hydrolase that promotes the GTP-dependent binding of aminoacyl-tRNA to the A-site of ribosomes during protein biosynthesis. The sequence is that of Elongation factor 1-alpha from Sulfurisphaera tokodaii (strain DSM 16993 / JCM 10545 / NBRC 100140 / 7) (Sulfolobus tokodaii).